Consider the following 56-residue polypeptide: MESKIEILSTINVEHSDDLYKIVDTLNRTLKRDNLMFGLALDEENKNQAVFTIYRT.

This is an uncharacterized protein from Bacillus subtilis (strain 168).